A 915-amino-acid polypeptide reads, in one-letter code: Transferrin-binding protein A (915 aa).

Positions 1-24 (MQQQHLFRLNILCLSLMTALPAYA) are cleaved as a signal peptide. The TonB box motif lies at 38–45 (DTIQVKAK). Residues 51–176 (RDNEVTGLGK…LAGSVAFQTK (126 aa)) enclose the TBDR plug domain. The TBDR beta-barrel domain occupies 187–915 (QWGIQSKTAY…NYTFSLEMKF (729 aa)). A compositionally biased stretch (polar residues) spans 526-540 (LKTPPQNNGKKTSPN). The interval 526–545 (LKTPPQNNGKKTSPNGREKN) is disordered. The TonB C-terminal box motif lies at 898 to 915 (NRYAAPGRNYTFSLEMKF).

Belongs to the TonB-dependent receptor family. In terms of assembly, binds both human apo- and holo-transferrin (TF), via the TF C-terminus. Forms a large complex with TF and TbpB.

The protein resides in the cell outer membrane. Functionally, neisseria acquires iron by extracting it from serum transferrin (TF) in its human host. Acts as a TF receptor and is required for TF utilization. Binds both apo- and holo-TF, via the TF C-terminus. This Neisseria gonorrhoeae protein is Transferrin-binding protein A.